We begin with the raw amino-acid sequence, 444 residues long: Cysteine proteinase 2 (444 aa).

A signal peptide (or 27) is located at residues Met-1–Ala-19. A propeptide spans Ala-20–Ser-124 (activation peptide). Residues Cys-147 and Cys-188 are joined by a disulfide bond. Residue Cys-150 is part of the active site. N-linked (GlcNAc...) asparagine glycosylation is present at Asn-228. Catalysis depends on residues His-289 and Asn-309. N-linked (GlcNAc...) asparagine glycosylation occurs at Asn-372.

Belongs to the peptidase C1 family.

The protein resides in the lysosome. In terms of biological role, the cysteine proteinases have a potential role in host-parasite interaction and virulence. The protein is Cysteine proteinase 2 (CYS2) of Leishmania pifanoi.